A 63-amino-acid polypeptide reads, in one-letter code: Large ribosomal subunit protein uL29 (63 aa).

This sequence belongs to the universal ribosomal protein uL29 family.

The protein is Large ribosomal subunit protein uL29 of Salmonella agona (strain SL483).